Reading from the N-terminus, the 479-residue chain is Altronate oxidoreductase (479 aa).

18 to 29 (IIQFGEGNFLRA) contributes to the NAD(+) binding site.

This sequence belongs to the mannitol dehydrogenase family. UxaB subfamily.

The catalysed reaction is D-altronate + NAD(+) = keto-D-tagaturonate + NADH + H(+). It functions in the pathway carbohydrate metabolism; pentose and glucuronate interconversion. This is Altronate oxidoreductase from Bacteroides thetaiotaomicron (strain ATCC 29148 / DSM 2079 / JCM 5827 / CCUG 10774 / NCTC 10582 / VPI-5482 / E50).